A 374-amino-acid polypeptide reads, in one-letter code: Ferroptosis suppressor protein 1 (374 aa).

The N-myristoyl glycine moiety is linked to residue Gly2. Residues 13 to 35 (VVIVGGGFAGIAAATQLKSFGIP) traverse the membrane as a helical segment. 6-hydroxy-FAD is bound by residues 17 to 21 (GGGFA), Arg53, and Val81. Lys167 carries the N6-acetyllysine modification. A 6-hydroxy-FAD-binding site is contributed by Asp285.

The protein belongs to the FAD-dependent oxidoreductase family. Requires 6-hydroxy-FAD as cofactor. In terms of processing, N-myristoylation at Gly-2 mediates the recruitment to lipid droplets and plasma membrane. Acetylation at Lys-167 prevents AIFM2 ubiquitination and degradation, thereby inhibiting ferroptosis. KAT2B mediates acetylation at Lys-167, while HDAC3 removes it. Post-translationally, ubiquitinated. AIFM2 undergoes 'Lys-29'-ubiquitination and proteasomal degradation, which is inhibited by acetylation at Lys-167.

The protein localises to the lipid droplet. The protein resides in the cell membrane. It is found in the cytoplasm. Its subcellular location is the mitochondrion membrane. It localises to the nucleus. The enzyme catalyses ubiquinone-10 + NADH + H(+) = ubiquinol-10 + NAD(+). It carries out the reaction phylloquinone + NADH + H(+) = phylloquinol + NAD(+). It catalyses the reaction menaquinone-4 + NADH + H(+) = menaquinol-4 + NAD(+). The catalysed reaction is menadione + NADH + H(+) = menadiol + NAD(+). Its activity is regulated as follows. The modification by 4-hydroxy-2-nonenal (HNE) adduction in mitochondria results in loss of the oxidoreductase activity and activation of a novel function in mitochondrial oxidative stress signaling. Its function is as follows. An NAD(P)H-dependent oxidoreductase that acts as a key inhibitor of ferroptosis. At the plasma membrane, catalyzes reduction of coenzyme Q/ubiquinone-10 to ubiquinol-10, a lipophilic radical-trapping antioxidant that prevents lipid oxidative damage and consequently ferroptosis. Acts in parallel to GPX4 to suppress phospholipid peroxidation and ferroptosis. This anti-ferroptotic function is independent of cellular glutathione levels. Also acts as a potent radical-trapping antioxidant by mediating warfarin-resistant vitamin K reduction in the canonical vitamin K cycle: catalyzes NAD(P)H-dependent reduction of vitamin K (phylloquinone, menaquinone-4 and menadione) to hydroquinone forms. Hydroquinones act as potent radical-trapping antioxidants inhibitor of phospholipid peroxidation and ferroptosis. May play a role in mitochondrial stress signaling. Upon oxidative stress, associates with the lipid peroxidation end product 4-hydroxy-2-nonenal (HNE) forming a lipid adduct devoid of oxidoreductase activity, which then translocates from mitochondria into the nucleus triggering DNA damage and cell death. The polypeptide is Ferroptosis suppressor protein 1 (aifm2) (Xenopus tropicalis (Western clawed frog)).